We begin with the raw amino-acid sequence, 229 residues long: Ribonuclease 3 (229 aa).

The RNase III domain maps to 4–133; it reads WEELQESVGF…FIGALYLDNG (130 aa). Glutamate 46 provides a ligand contact to Mg(2+). Aspartate 50 is a catalytic residue. Residues aspartate 119 and glutamate 122 each contribute to the Mg(2+) site. Glutamate 122 is a catalytic residue. The region spanning 159–228 is the DRBM domain; it reads DYKTQLQEIV…AQFAINKLIH (70 aa).

The protein belongs to the ribonuclease III family. As to quaternary structure, homodimer. Requires Mg(2+) as cofactor.

The protein localises to the cytoplasm. The enzyme catalyses Endonucleolytic cleavage to 5'-phosphomonoester.. Digests double-stranded RNA. Involved in the processing of primary rRNA transcript to yield the immediate precursors to the large and small rRNAs (23S and 16S). Processes some mRNAs, and tRNAs when they are encoded in the rRNA operon. Processes pre-crRNA and tracrRNA of type II CRISPR loci if present in the organism. The sequence is that of Ribonuclease 3 from Listeria monocytogenes serovar 1/2a (strain ATCC BAA-679 / EGD-e).